Reading from the N-terminus, the 1197-residue chain is DNA-directed RNA polymerase subunit beta (1197 aa).

The protein belongs to the RNA polymerase beta chain family. The RNAP catalytic core consists of 2 alpha, 1 beta, 1 beta' and 1 omega subunit. When a sigma factor is associated with the core the holoenzyme is formed, which can initiate transcription.

The catalysed reaction is RNA(n) + a ribonucleoside 5'-triphosphate = RNA(n+1) + diphosphate. Its function is as follows. DNA-dependent RNA polymerase catalyzes the transcription of DNA into RNA using the four ribonucleoside triphosphates as substrates. The chain is DNA-directed RNA polymerase subunit beta from Streptococcus pyogenes serotype M12 (strain MGAS9429).